The sequence spans 62 residues: Defensin BmKDfsin3 (62 aa).

The signal sequence occupies residues 1 to 24 (MKTIVILFVLALVFCTLEMGMVEA). 3 disulfide bridges follow: Cys28–Cys49, Cys35–Cys57, and Cys39–Cys59.

It belongs to the invertebrate defensin family. Type 2 subfamily. In terms of tissue distribution, low expression in both venom and non-venom glands (hemolymph).

It localises to the secreted. Its function is as follows. Antibacterial peptide active against Gram-positive bacteria (including S.aureus ATCC25923 (MIC=2.5 uM), M.luteus AB93113 (MIC=2.5 uM), and the antibiotic-resistant S.epidermidis PRSE P1389 (MIC=1.25 uM)), but not against Gram-negative bacteria (including E.coli and P.aeruginosa). Also blocks the currents of Kv1.1/KCNA1 (57% inhibition), Kv1.2/KCNA2 (27.5% inhibition), Kv1.3/KCNA3 (IC(50)=23.4 nM, 84.3% inhibition), KCa3.1/KCNN4/IK (15% inhibition), KCa2.3/KCNN3/SK3 (87.5% inhibition) and Kv11.1/KCNH2/ERG1 (30.4% inhibition) channels (tested at 1 uM). It inhibits potassium channel current by interacting with the pore region. This chain is Defensin BmKDfsin3, found in Olivierus martensii (Manchurian scorpion).